The following is a 731-amino-acid chain: 1,4-alpha-glucan branching enzyme GlgB (731 aa).

The Nucleophile role is filled by Asp-412. Glu-465 serves as the catalytic Proton donor.

Belongs to the glycosyl hydrolase 13 family. GlgB subfamily. As to quaternary structure, monomer.

The enzyme catalyses Transfers a segment of a (1-&gt;4)-alpha-D-glucan chain to a primary hydroxy group in a similar glucan chain.. Its pathway is glycan biosynthesis; glycogen biosynthesis. Its function is as follows. Catalyzes the formation of the alpha-1,6-glucosidic linkages in glycogen by scission of a 1,4-alpha-linked oligosaccharide from growing alpha-1,4-glucan chains and the subsequent attachment of the oligosaccharide to the alpha-1,6 position. This Bordetella pertussis (strain Tohama I / ATCC BAA-589 / NCTC 13251) protein is 1,4-alpha-glucan branching enzyme GlgB.